We begin with the raw amino-acid sequence, 250 residues long: Phosphonates import ATP-binding protein PhnC (250 aa).

The ABC transporter domain occupies 2–247 (IVFNNVNKVW…KLDAQAMKKI (246 aa)). Residue 35 to 42 (GLSGAGKT) coordinates ATP.

The protein belongs to the ABC transporter superfamily. Phosphonates importer (TC 3.A.1.9.1) family. The complex is composed of two ATP-binding proteins (PhnC), two transmembrane proteins (PhnE) and a solute-binding protein (PhnD).

The protein resides in the cell membrane. The catalysed reaction is phosphonate(out) + ATP + H2O = phosphonate(in) + ADP + phosphate + H(+). Its function is as follows. Part of the ABC transporter complex PhnCDE involved in phosphonates import. Responsible for energy coupling to the transport system. The protein is Phosphonates import ATP-binding protein PhnC of Mycoplasma mycoides subsp. mycoides SC (strain CCUG 32753 / NCTC 10114 / PG1).